Reading from the N-terminus, the 152-residue chain is Ribosome maturation factor RimP (152 aa).

Belongs to the RimP family.

The protein localises to the cytoplasm. In terms of biological role, required for maturation of 30S ribosomal subunits. The sequence is that of Ribosome maturation factor RimP from Ruminiclostridium cellulolyticum (strain ATCC 35319 / DSM 5812 / JCM 6584 / H10) (Clostridium cellulolyticum).